Reading from the N-terminus, the 344-residue chain is 17-beta-hydroxysteroid dehydrogenase type 1 (344 aa).

Residue 3 to 32 (PTVVLITGCSSGIGMHLAVRLASDRSQSFK) participates in NAD(+) binding. Residues 10 to 38 (GCSSGIGMHLAVRLASDRSQSFKVYATLR) and D66 contribute to the NADP(+) site. S135 carries the phosphoserine modification. S143 lines the substrate pocket. The active-site Proton acceptor is Y156. Position 160 (K160) interacts with NADP(+).

The protein belongs to the short-chain dehydrogenases/reductases (SDR) family. In terms of assembly, homodimer. Exists predominantly as a homodimer but also exits as monomer.

It is found in the cytoplasm. It carries out the reaction 17beta-estradiol + NAD(+) = estrone + NADH + H(+). It catalyses the reaction 17beta-estradiol + NADP(+) = estrone + NADPH + H(+). The catalysed reaction is testosterone + NADP(+) = androst-4-ene-3,17-dione + NADPH + H(+). It participates in steroid biosynthesis; estrogen biosynthesis. Favors the reduction of estrogens and androgens. Converts estrone (E1) to a more potent estrogen, 17beta-estradiol (E2). Also has 20-alpha-HSD activity. Uses preferentially NADH. This is 17-beta-hydroxysteroid dehydrogenase type 1 from Mus musculus (Mouse).